A 466-amino-acid chain; its full sequence is Soluble pyridine nucleotide transhydrogenase (466 aa).

36–45 (ERYQNVGGGC) provides a ligand contact to FAD.

It belongs to the class-I pyridine nucleotide-disulfide oxidoreductase family. It depends on FAD as a cofactor.

The protein resides in the cytoplasm. The enzyme catalyses NAD(+) + NADPH = NADH + NADP(+). In terms of biological role, conversion of NADPH, generated by peripheral catabolic pathways, to NADH, which can enter the respiratory chain for energy generation. In Escherichia fergusonii (strain ATCC 35469 / DSM 13698 / CCUG 18766 / IAM 14443 / JCM 21226 / LMG 7866 / NBRC 102419 / NCTC 12128 / CDC 0568-73), this protein is Soluble pyridine nucleotide transhydrogenase.